We begin with the raw amino-acid sequence, 147 residues long: Catabolic 3-dehydroquinase 2 (147 aa).

Tyrosine 23 functions as the Proton acceptor in the catalytic mechanism. Substrate-binding residues include asparagine 74, histidine 80, and aspartate 87. The Proton donor role is filled by histidine 100. Substrate-binding positions include 101 to 102 (IT) and arginine 111.

The protein belongs to the type-II 3-dehydroquinase family. As to quaternary structure, homododecamer. Adopts a ring-like structure, composed of an arrangement of two hexameric rings stacked on top of one another.

The enzyme catalyses 3-dehydroquinate = 3-dehydroshikimate + H2O. It functions in the pathway aromatic compound metabolism; 3,4-dihydroxybenzoate biosynthesis; 3,4-dihydroxybenzoate from 3-dehydroquinate: step 1/2. Its function is as follows. Is involved in the catabolism of quinate. Allows the utilization of quinate as carbon source via the beta-ketoadipate pathway. The protein is Catabolic 3-dehydroquinase 2 of Aspergillus terreus (strain NIH 2624 / FGSC A1156).